The chain runs to 427 residues: Vitamin D3 receptor (427 aa).

A DNA-binding region (nuclear receptor) is located at residues 21-96 (PRICGVCGDR…IGMMKEFILT (76 aa)). The Zn(2+) site is built by cysteine 24, cysteine 27, cysteine 41, cysteine 44, cysteine 60, cysteine 66, cysteine 76, and cysteine 79. NR C4-type zinc fingers lie at residues 24–44 (CGVCGDRATGFHFNAMTCEGC) and 60–84 (CPFNGDCRITKDNRRHCQACRLKRC). The segment at 97 to 126 (DEEVQRKREMILKRKEEEALKDSLRPKLSE) is hinge. One can recognise an NR LBD domain in the interval 127–423 (EQQRIIAILL…LTPLVLEVFG (297 aa)). Residue tyrosine 143 coordinates calcitriol. The disordered stretch occupies residues 158-183 (RVNDGGGSHPSRPNSRHTPSFSGDSS). Serine 237 serves as a coordination point for calcitriol. The interval 246 to 264 (KMIPGFRDLTSEDQIVLLK) is interaction with coactivator LXXLL motif. Calcitriol contacts are provided by arginine 274, serine 278, histidine 305, and histidine 397. A 9aaTAD motif is present at residues 416 to 424 (PLVLEVFGN).

The protein belongs to the nuclear hormone receptor family. NR1 subfamily. As to quaternary structure, homodimer in the absence of bound vitamin D3. Heterodimer with RXRA after vitamin D3 binding. Interacts with MED1, NCOA1, NCOA2, NCOA3 and NCOA6 coactivators, leading to a strong increase of transcription of target genes. Interacts with the corepressor NCOR1. Interacts with SNW1. Interacts with IRX4, the interaction does not affect its transactivation activity. Post-translationally, ubiquitinated by UBR5, leading to its degradation: UBR5 specifically recognizes and binds ligand-bound VDR when it is not associated with coactivators (NCOAs). In presence of NCOAs, the UBR5-degron is not accessible, preventing its ubiquitination and degradation.

It localises to the nucleus. Its subcellular location is the cytoplasm. Functionally, nuclear receptor for calcitriol, the active form of vitamin D3 which mediates the action of this vitamin on cells. Enters the nucleus upon vitamin D3 binding where it forms heterodimers with the retinoid X receptor/RXR. The VDR-RXR heterodimers bind to specific response elements on DNA and activate the transcription of vitamin D3-responsive target genes. Plays a central role in calcium homeostasis. This Saguinus oedipus (Cotton-top tamarin) protein is Vitamin D3 receptor (VDR).